Here is a 250-residue protein sequence, read N- to C-terminus: Transmembrane protein 106C (250 aa).

The disordered stretch occupies residues 1–25 (MGSQHSAAARPSSCRRKQEDDRDGL). The N-myristoyl glycine moiety is linked to residue Gly2. Basic and acidic residues predominate over residues 16–25 (RKQEDDRDGL). Residues 87–107 (YVLLSILLCLLASGLVVFFLF) form a helical membrane-spanning segment. N-linked (GlcNAc...) asparagine glycosylation is found at Asn173 and Asn186. The chain crosses the membrane as a helical span at residues 197–217 (FSYVYFFCTVPEILVHNIVIF).

The protein belongs to the TMEM106 family. As to quaternary structure, interacts with TMEM106B.

The protein localises to the endoplasmic reticulum membrane. The protein resides in the membrane. The sequence is that of Transmembrane protein 106C (TMEM106C) from Homo sapiens (Human).